We begin with the raw amino-acid sequence, 221 residues long: Oxaloacetate tautomerase FAHD1, mitochondrial (221 aa).

A mitochondrion-targeting transit peptide spans 1–24; it reads MAASRPLSRFWEWGKNIVCVGRNY. A Phosphoserine modification is found at Ser-37. The Mg(2+) site is built by Glu-68, Glu-70, and Asp-99. N6-acetyllysine is present on Lys-110. Position 112 is an N6-succinyllysine (Lys-112).

It belongs to the FAH family. As to quaternary structure, homodimer. Requires Mg(2+) as cofactor. Mn(2+) serves as cofactor.

The protein resides in the mitochondrion. It localises to the cytoplasm. It is found in the cytosol. The enzyme catalyses oxaloacetate = enol-oxaloacetate. The catalysed reaction is oxaloacetate + H(+) = pyruvate + CO2. It carries out the reaction a 3-acylpyruvate + H2O = a carboxylate + pyruvate + H(+). It catalyses the reaction acetylpyruvate + H2O = acetate + pyruvate + H(+). The enzyme catalyses 3-fumarylpyruvate + H2O = fumarate + pyruvate + H(+). Oxaloacetate decarboxylation is competitively inhibited by oxalate. Its function is as follows. Tautomerase that converts enol-oxaloacetate, a strong inhibitor of succinate dehydrogenase, to the physiological keto form of oxaloacetate. It is thereby required to maximize aerobic respiration efficiency by preventing succinate dehydrogenase inhibition. Also acts as a weak oxaloacetate decarboxylase (ODx), catalyzing the decarboxylation of oxaloacetate (OAA) to pyruvate and CO(2), and as such is likely a regulatory enzyme in the TCA cycle. Also displays acylpyruvase activity, being able to hydrolyze acetylpyruvate and fumarylpyruvate in vitro. The protein is Oxaloacetate tautomerase FAHD1, mitochondrial (FAHD1) of Pongo abelii (Sumatran orangutan).